Here is a 335-residue protein sequence, read N- to C-terminus: uncharacterized protein (335 aa).

28–35 serves as a coordination point for ATP; it reads GPINSGKT.

It belongs to the archaeal ATPase family.

This is an uncharacterized protein from Pyrococcus abyssi (strain GE5 / Orsay).